Consider the following 334-residue polypeptide: Ketol-acid reductoisomerase (NADP(+)) (334 aa).

Residues methionine 1 to threonine 181 form the KARI N-terminal Rossmann domain. NADP(+) is bound by residues tyrosine 25–glutamine 28, arginine 48, serine 52, and aspartate 82–glutamine 85. The active site involves histidine 107. Glycine 133 is a binding site for NADP(+). Positions threonine 182–isoleucine 327 constitute a KARI C-terminal knotted domain. 4 residues coordinate Mg(2+): aspartate 190, glutamate 194, glutamate 226, and glutamate 230. Residue serine 251 participates in substrate binding.

The protein belongs to the ketol-acid reductoisomerase family. Requires Mg(2+) as cofactor.

The enzyme catalyses (2R)-2,3-dihydroxy-3-methylbutanoate + NADP(+) = (2S)-2-acetolactate + NADPH + H(+). It carries out the reaction (2R,3R)-2,3-dihydroxy-3-methylpentanoate + NADP(+) = (S)-2-ethyl-2-hydroxy-3-oxobutanoate + NADPH + H(+). The protein operates within amino-acid biosynthesis; L-isoleucine biosynthesis; L-isoleucine from 2-oxobutanoate: step 2/4. It functions in the pathway amino-acid biosynthesis; L-valine biosynthesis; L-valine from pyruvate: step 2/4. Its function is as follows. Involved in the biosynthesis of branched-chain amino acids (BCAA). Catalyzes an alkyl-migration followed by a ketol-acid reduction of (S)-2-acetolactate (S2AL) to yield (R)-2,3-dihydroxy-isovalerate. In the isomerase reaction, S2AL is rearranged via a Mg-dependent methyl migration to produce 3-hydroxy-3-methyl-2-ketobutyrate (HMKB). In the reductase reaction, this 2-ketoacid undergoes a metal-dependent reduction by NADPH to yield (R)-2,3-dihydroxy-isovalerate. In Staphylococcus aureus (strain MSSA476), this protein is Ketol-acid reductoisomerase (NADP(+)).